Reading from the N-terminus, the 216-residue chain is Nucleolar protein 12 (216 aa).

Residues 33–97 (GFHKRKVERK…LVTAKTESVQ (65 aa)) are a coiled coil. The tract at residues 120–216 (LLGLPLPEQG…MTGKARHNGE (97 aa)) is disordered. The segment covering 129 to 140 (GDQDGSQEEEVS) has biased composition (acidic residues). 2 stretches are compositionally biased toward basic residues: residues 171-183 (AHSRKKVKRKHPR) and 200-216 (KTQRRRRMTGKARHNGE).

This sequence belongs to the RRP17 family. In terms of assembly, interacts with KIAA1191.

Its subcellular location is the nucleus. It is found in the nucleolus. The protein localises to the cytoplasm. Its function is as follows. Multifunctional RNA binding protein that plays a role in RNA metabolism and DNA maintenance. Participates in the resolution of DNA stress and the maintenance of genome integrity by localizing to sites of DNA insults. Also plays a role in proper nucleolar organization by limiting nucleolar size and regulating nucleolar number. Mechanistically, regulates the nucleolar levels of fibrillarin and nucleolin, two key players in pre-rRNA processing and ribosome assembly. The polypeptide is Nucleolar protein 12 (Nol12) (Rattus norvegicus (Rat)).